A 319-amino-acid polypeptide reads, in one-letter code: Ribonuclease Z (319 aa).

The Zn(2+) site is built by His-62, His-64, Asp-66, His-67, His-145, Asp-215, and His-273. Asp-66 functions as the Proton acceptor in the catalytic mechanism.

It belongs to the RNase Z family. In terms of assembly, homodimer. Requires Zn(2+) as cofactor.

The catalysed reaction is Endonucleolytic cleavage of RNA, removing extra 3' nucleotides from tRNA precursor, generating 3' termini of tRNAs. A 3'-hydroxy group is left at the tRNA terminus and a 5'-phosphoryl group is left at the trailer molecule.. Zinc phosphodiesterase, which displays some tRNA 3'-processing endonuclease activity. Probably involved in tRNA maturation, by removing a 3'-trailer from precursor tRNA. The protein is Ribonuclease Z of Borrelia duttonii (strain Ly).